We begin with the raw amino-acid sequence, 163 residues long: NADH-quinone oxidoreductase subunit I (163 aa).

2 4Fe-4S ferredoxin-type domains span residues 53-83 (LRRY…IEAG) and 94-123 (VRYD…EGPN). [4Fe-4S] cluster contacts are provided by Cys63, Cys66, Cys69, Cys73, Cys103, Cys106, Cys109, and Cys113.

This sequence belongs to the complex I 23 kDa subunit family. As to quaternary structure, NDH-1 is composed of 14 different subunits. Subunits NuoA, H, J, K, L, M, N constitute the membrane sector of the complex. [4Fe-4S] cluster serves as cofactor.

It localises to the cell inner membrane. It catalyses the reaction a quinone + NADH + 5 H(+)(in) = a quinol + NAD(+) + 4 H(+)(out). Functionally, NDH-1 shuttles electrons from NADH, via FMN and iron-sulfur (Fe-S) centers, to quinones in the respiratory chain. The immediate electron acceptor for the enzyme in this species is believed to be ubiquinone. Couples the redox reaction to proton translocation (for every two electrons transferred, four hydrogen ions are translocated across the cytoplasmic membrane), and thus conserves the redox energy in a proton gradient. The sequence is that of NADH-quinone oxidoreductase subunit I from Chelativorans sp. (strain BNC1).